The primary structure comprises 300 residues: Elongator complex protein 5 (300 aa).

Ser252 carries the phosphoserine modification. Residues Gln264–Ile300 are disordered. A compositionally biased stretch (acidic residues) spans Asp284–Ile300.

Belongs to the ELP5 family. In terms of assembly, component of the elongator complex which consists of ELP1, ELP2, ELP3, ELP4, ELP5 and ELP6; in the complex, is required for optimal binding of ELP3 to ELP4. In terms of processing, tyrosine-phosphorylated. Ubiquitously expressed with high levels in heart, brain, liver, skeletal muscle and testis.

It localises to the nucleus. It is found in the cytoplasm. Its pathway is tRNA modification; 5-methoxycarbonylmethyl-2-thiouridine-tRNA biosynthesis. Its function is as follows. Component of the elongator complex which is required for multiple tRNA modifications, including mcm5U (5-methoxycarbonylmethyl uridine), mcm5s2U (5-methoxycarbonylmethyl-2-thiouridine), and ncm5U (5-carbamoylmethyl uridine). The elongator complex catalyzes formation of carboxymethyluridine in the wobble base at position 34 in tRNAs. Involved in cell migration. The chain is Elongator complex protein 5 from Homo sapiens (Human).